A 285-amino-acid chain; its full sequence is ATP synthase subunit a (285 aa).

The next 6 helical transmembrane spans lie at 41–61 (TWHVDTLAWSIGLGLIFLWIF), 102–122 (IAPLALTIFVWVFLMNLMDLI), 164–184 (LGVFILMVGFAIKIKGIGGFI), 197–217 (VFVQILLIPFNLLLELIALVS), 226–246 (LFGNLYAGELIFILIGAIGFM), and 252–272 (FVWAVFHILVITLQAFLFMML).

This sequence belongs to the ATPase A chain family. F-type ATPases have 2 components, CF(1) - the catalytic core - and CF(0) - the membrane proton channel. CF(1) has five subunits: alpha(3), beta(3), gamma(1), delta(1), epsilon(1). CF(0) has three main subunits: a(1), b(2) and c(9-12). The alpha and beta chains form an alternating ring which encloses part of the gamma chain. CF(1) is attached to CF(0) by a central stalk formed by the gamma and epsilon chains, while a peripheral stalk is formed by the delta and b chains.

It localises to the cell inner membrane. In terms of biological role, key component of the proton channel; it plays a direct role in the translocation of protons across the membrane. The sequence is that of ATP synthase subunit a from Pseudoalteromonas translucida (strain TAC 125).